Here is a 165-residue protein sequence, read N- to C-terminus: CDP-archaeol synthase (165 aa).

4 helical membrane passes run 41–61, 72–92, 103–123, and 127–147; these read GLICGVLAGVLIGLVQIWLVG, ILSVTLLALGALLGDMGKSFI, AWPVADQYDLVVGAFLLTIIF, and WFFAVVTLPVLIAILVITPVL.

The protein belongs to the CDP-archaeol synthase family. Requires Mg(2+) as cofactor.

It localises to the cell membrane. The catalysed reaction is 2,3-bis-O-(geranylgeranyl)-sn-glycerol 1-phosphate + CTP + H(+) = CDP-2,3-bis-O-(geranylgeranyl)-sn-glycerol + diphosphate. Its pathway is membrane lipid metabolism; glycerophospholipid metabolism. Its function is as follows. Catalyzes the formation of CDP-2,3-bis-(O-geranylgeranyl)-sn-glycerol (CDP-archaeol) from 2,3-bis-(O-geranylgeranyl)-sn-glycerol 1-phosphate (DGGGP) and CTP. This reaction is the third ether-bond-formation step in the biosynthesis of archaeal membrane lipids. This chain is CDP-archaeol synthase, found in Methanoregula boonei (strain DSM 21154 / JCM 14090 / 6A8).